Here is a 133-residue protein sequence, read N- to C-terminus: Large ribosomal subunit protein uL15 (133 aa).

The segment at 1-58 (MALQNLTPAPGSTHATKRLGRGQGSGNGKTAGKGNKGQRARKGYNEKRGFEGGQQPLQ) is disordered. The span at 21–35 (RGQGSGNGKTAGKGN) shows a compositional bias: gly residues.

It belongs to the universal ribosomal protein uL15 family. In terms of assembly, part of the 50S ribosomal subunit.

Its function is as follows. Binds to the 23S rRNA. This Campylobacter curvus (strain 525.92) protein is Large ribosomal subunit protein uL15.